Reading from the N-terminus, the 374-residue chain is MTSPALKDPAKTRVIVGMSGGVDSSVSALLLMEQGYQVEGLFMKNWEEDDGTEYCTAREDLADAQAVCDRIGIKLHTANFAAEYWDNVFEHFLEEYKAGRTPNPDILCNREIKFKAFLDYALSLGADLIATGHYVRRRDTGAVTELLKGLDPNKDQSYFLHAVGGKEIARTLFPVGELEKPEVRAIAEKHGLATAKKKDSTGICFIGERRFSDFLKQYLPAQPGEIQTTEGEVIGRHHGLMYHTIGQRQGLGIGGLKDAGDEPWYVLHKDLTRNVLVVGQGNEHPWLFSRALLASEIFWVNPIDLSSPRTLTAKVRYRQSDQRCTLALTESGYRAVFDEPQRAVTPGQSVVFYDGEVCLGGGVIETAEPWSPRA.

Residues Gly17–Ser24 and Met43 each bind ATP. The interval Asn103 to Asp105 is interaction with target base in tRNA. Cys108 acts as the Nucleophile in catalysis. Cysteines 108 and 204 form a disulfide. Gly132 lines the ATP pocket. The interaction with tRNA stretch occupies residues Lys154–Gln156. The active-site Cysteine persulfide intermediate is the Cys204. Residues Arg316–Tyr317 form an interaction with tRNA region.

It belongs to the MnmA/TRMU family.

Its subcellular location is the cytoplasm. It carries out the reaction S-sulfanyl-L-cysteinyl-[protein] + uridine(34) in tRNA + AH2 + ATP = 2-thiouridine(34) in tRNA + L-cysteinyl-[protein] + A + AMP + diphosphate + H(+). Catalyzes the 2-thiolation of uridine at the wobble position (U34) of tRNA, leading to the formation of s(2)U34. In Pseudomonas putida (strain W619), this protein is tRNA-specific 2-thiouridylase MnmA.